We begin with the raw amino-acid sequence, 417 residues long: uncharacterized protein (417 aa).

An N-terminal signal peptide occupies residues 1–21 (MPYYWGAILIGGVFLAGCTQN).

This is an uncharacterized protein from Methanocaldococcus jannaschii (strain ATCC 43067 / DSM 2661 / JAL-1 / JCM 10045 / NBRC 100440) (Methanococcus jannaschii).